The primary structure comprises 457 residues: Tryptophan aminotransferase-related protein 3 (457 aa).

Residues 6 to 26 (LLIAGSIILNLVFTIHILYNN) form a helical membrane-spanning segment. Pyridoxal 5'-phosphate-binding positions include Y123, 163 to 164 (AT), N237, 257 to 260 (DYAY), 280 to 283 (SLSK), and R291. K283 bears the N6-(pyridoxal phosphate)lysine mark.

It belongs to the alliinase family. Pyridoxal 5'-phosphate is required as a cofactor.

The protein resides in the membrane. Its function is as follows. Probable aminotransferase. The polypeptide is Tryptophan aminotransferase-related protein 3 (TAR3) (Arabidopsis thaliana (Mouse-ear cress)).